The primary structure comprises 221 residues: Large ribosomal subunit protein uL16x (221 aa).

Belongs to the universal ribosomal protein uL16 family. As to quaternary structure, component of the small ribosomal subunit. Mature ribosomes consist of a small (40S) and a large (60S) subunit. The 40S subunit contains about 33 different proteins and 1 molecule of RNA (18S). The 60S subunit contains about 49 different proteins and 3 molecules of RNA (25S, 5.8S and 5S).

This is Large ribosomal subunit protein uL16x (RPL10C) from Arabidopsis thaliana (Mouse-ear cress).